The chain runs to 349 residues: Fructose-1,6-bisphosphatase class 1 (349 aa).

Mg(2+)-binding residues include Glu113, Asp135, Ile137, and Asp138. Substrate contacts are provided by residues 138-141 (DGSS), Asn230, Tyr258, and Lys288. Residue Glu294 coordinates Mg(2+).

It belongs to the FBPase class 1 family. Homotetramer. Mg(2+) is required as a cofactor.

Its subcellular location is the cytoplasm. It carries out the reaction beta-D-fructose 1,6-bisphosphate + H2O = beta-D-fructose 6-phosphate + phosphate. It functions in the pathway carbohydrate biosynthesis; Calvin cycle. In Trichormus variabilis (strain ATCC 29413 / PCC 7937) (Anabaena variabilis), this protein is Fructose-1,6-bisphosphatase class 1.